Here is a 770-residue protein sequence, read N- to C-terminus: Kinesin-like protein klpA (770 aa).

The tract at residues 1-152 is disordered; the sequence is MENVQSRMQG…GLGKRGEWDQ (152 aa). Residues 85–105 show a composition bias toward low complexity; that stretch reads SSTLTRSASAASRPRGPLSSS. A compositionally biased stretch (polar residues) spans 106 to 119; sequence TSGRPKTSMSTSRR. Positions 134–152 are enriched in basic and acidic residues; that stretch reads THQEERSYGGLGKRGEWDQ. A coiled-coil region spans residues 175–425; the sequence is QESSGLKDAL…QELKGNIRVF (251 aa). Positions 421-756 constitute a Kinesin motor domain; sequence NIRVFCRVRP…LKFATKVHNT (336 aa). Position 514-521 (514-521) interacts with ATP; that stretch reads GQTGSGKT.

The protein belongs to the TRAFAC class myosin-kinesin ATPase superfamily. Kinesin family. NCD subfamily.

Its subcellular location is the cytoplasm. The protein localises to the cytoskeleton. The chain is Kinesin-like protein klpA (klpA) from Emericella nidulans (strain FGSC A4 / ATCC 38163 / CBS 112.46 / NRRL 194 / M139) (Aspergillus nidulans).